Consider the following 193-residue polypeptide: ATP synthase subunit b 1 (193 aa).

Residues 13–32 (PAVTGGDTHSGTGVPAEAHG) form a disordered region. A helical membrane pass occupies residues 40-60 (ATFPSQLLWLAITFGLFYLFL).

This sequence belongs to the ATPase B chain family. F-type ATPases have 2 components, F(1) - the catalytic core - and F(0) - the membrane proton channel. F(1) has five subunits: alpha(3), beta(3), gamma(1), delta(1), epsilon(1). F(0) has three main subunits: a(1), b(2) and c(10-14). The alpha and beta chains form an alternating ring which encloses part of the gamma chain. F(1) is attached to F(0) by a central stalk formed by the gamma and epsilon chains, while a peripheral stalk is formed by the delta and b chains.

The protein resides in the cell inner membrane. F(1)F(0) ATP synthase produces ATP from ADP in the presence of a proton or sodium gradient. F-type ATPases consist of two structural domains, F(1) containing the extramembraneous catalytic core and F(0) containing the membrane proton channel, linked together by a central stalk and a peripheral stalk. During catalysis, ATP synthesis in the catalytic domain of F(1) is coupled via a rotary mechanism of the central stalk subunits to proton translocation. Its function is as follows. Component of the F(0) channel, it forms part of the peripheral stalk, linking F(1) to F(0). The sequence is that of ATP synthase subunit b 1 from Mesorhizobium japonicum (strain LMG 29417 / CECT 9101 / MAFF 303099) (Mesorhizobium loti (strain MAFF 303099)).